We begin with the raw amino-acid sequence, 308 residues long: Flavonol synthase 3 (308 aa).

The region spanning 167-267 (TIEYLMKINY…RISWPVFVES (101 aa)) is the Fe2OG dioxygenase domain. Position 175 to 177 (175 to 177 (NYY)) interacts with 2-oxoglutarate. Fe cation is bound by residues His-192, Asp-194, and His-248. Residue 258-260 (RIS) coordinates 2-oxoglutarate.

It belongs to the iron/ascorbate-dependent oxidoreductase family. It depends on Fe(2+) as a cofactor. In terms of tissue distribution, widely expressed at low levels.

The enzyme catalyses a (2R,3R)-dihydroflavonol + 2-oxoglutarate + O2 = a flavonol + succinate + CO2 + H2O. The protein operates within secondary metabolite biosynthesis; flavonoid biosynthesis. Functionally, catalyzes the formation of flavonols from dihydroflavonols. Possesses low activity in vitro towards dihydrokaempferol and dihydroquercetin producing kaempferol and quercitin, respectively. In Arabidopsis thaliana (Mouse-ear cress), this protein is Flavonol synthase 3.